The sequence spans 1486 residues: Chromosome partition protein MukB (1486 aa).

34–41 contributes to the ATP binding site; sequence GGNGAGKS. 3 coiled-coil regions span residues 326–418, 444–480, and 509–603; these read LEAD…QYNQ, LETF…QAYQ, and RHLA…RAPV. The segment at 666–783 is flexible hinge; it reads PGGSEDQRLN…EVPLFGRAAR (118 aa). 3 coiled-coil regions span residues 835 to 923, 977 to 1115, and 1209 to 1266; these read EAEI…AKLE, EMLS…TAKA, and VEAI…QNVS.

The protein belongs to the SMC family. MukB subfamily. Homodimerization via its hinge domain. Binds to DNA via its C-terminal region. Interacts, and probably forms a ternary complex, with MukE and MukF via its C-terminal region. The complex formation is stimulated by calcium or magnesium. Interacts with tubulin-related protein FtsZ.

It localises to the cytoplasm. The protein localises to the nucleoid. Its function is as follows. Plays a central role in chromosome condensation, segregation and cell cycle progression. Functions as a homodimer, which is essential for chromosome partition. Involved in negative DNA supercoiling in vivo, and by this means organize and compact chromosomes. May achieve or facilitate chromosome segregation by condensation DNA from both sides of a centrally located replisome during cell division. The sequence is that of Chromosome partition protein MukB from Escherichia coli O6:H1 (strain CFT073 / ATCC 700928 / UPEC).